Reading from the N-terminus, the 122-residue chain is UPF0102 protein Rleg2_4331 (122 aa).

Belongs to the UPF0102 family.

The polypeptide is UPF0102 protein Rleg2_4331 (Rhizobium leguminosarum bv. trifolii (strain WSM2304)).